Reading from the N-terminus, the 1123-residue chain is uncharacterized protein (1123 aa).

Disordered stretches follow at residues 136–229 (LGES…PKLT), 262–471 (MLQY…LNQH), 483–514 (LSSI…SPNL), 527–609 (KKIN…QSDD), 629–769 (SILC…NNIS), 782–812 (LKPK…NSSS), 835–1005 (ITNN…GESN), and 1070–1099 (NNNN…NNNI). The span at 166 to 185 (GGNGGNSGTNGDGDDGGCSL) shows a compositional bias: gly residues. Over residues 190 to 199 (DENDYEDGMV) the composition is skewed to acidic residues. The span at 211–223 (SGDGGGGGGGGGD) shows a compositional bias: gly residues. Over residues 262–322 (MLQYQQQQQQ…TTTTHSNNSN (61 aa)) the composition is skewed to low complexity. Polar residues predominate over residues 329–343 (PLNNSNSNIHFLTNQ). Low complexity-rich tracts occupy residues 344 to 387 (QNSD…SNLN), 397 to 464 (STST…SSSS), 489 to 499 (NNKENNNNNNN), 527 to 548 (KKIN…NISS), and 563 to 585 (HQQQ…QQHQ). Over residues 590 to 604 (SKSSSELQVPSSNYH) the composition is skewed to polar residues. Residues 632-646 (CKDDSKTNTNKDKDN) show a composition bias toward basic and acidic residues. Composition is skewed to low complexity over residues 647–707 (NNSN…INNN) and 727–769 (SVSS…NNIS). Polar residues predominate over residues 790 to 799 (SSPSIPTTSP). Composition is skewed to low complexity over residues 835 to 984 (ITNN…NNNI) and 1070 to 1098 (NNNN…NNNN).

This is an uncharacterized protein from Dictyostelium discoideum (Social amoeba).